The sequence spans 186 residues: dCTP deaminase (186 aa).

Lysine 107–arginine 112 lines the dCTP pocket. The active-site Proton donor/acceptor is the glutamate 133. Glutamine 152, tyrosine 166, and glutamine 176 together coordinate dCTP.

Belongs to the dCTP deaminase family. Homotrimer.

It catalyses the reaction dCTP + H2O + H(+) = dUTP + NH4(+). The protein operates within pyrimidine metabolism; dUMP biosynthesis; dUMP from dCTP (dUTP route): step 1/2. Its function is as follows. Catalyzes the deamination of dCTP to dUTP. This Campylobacter jejuni subsp. jejuni serotype O:2 (strain ATCC 700819 / NCTC 11168) protein is dCTP deaminase.